The sequence spans 368 residues: uncharacterized protein (368 aa).

2 disordered regions span residues 1–22 (MEKSSNTTGSGGPKSDSQLPEK) and 282–317 (KHLGRRSKKAQKRVEKMKKAYKESKEEKASSQEPPA). The segment covering 293–311 (KRVEKMKKAYKESKEEKAS) has biased composition (basic and acidic residues).

This is an uncharacterized protein from Mus musculus (Mouse).